The chain runs to 231 residues: uncharacterized protein (231 aa).

This sequence belongs to the DnaA family. HdA subfamily.

This is an uncharacterized protein from Haemophilus influenzae (strain ATCC 51907 / DSM 11121 / KW20 / Rd).